A 256-amino-acid chain; its full sequence is uncharacterized protein (256 aa).

Transmembrane regions (helical) follow at residues I32–F52, F59–G79, Y112–F132, L156–S176, L184–A204, C207–V227, and L230–Y250.

The protein belongs to the FNT transporter (TC 1.A.16) family.

The protein resides in the cell membrane. This is an uncharacterized protein from Bacillus subtilis (strain 168).